A 929-amino-acid polypeptide reads, in one-letter code: LPS-assembly protein LptD (929 aa).

The N-terminal stretch at 1–24 (MKLRFIRSAGWLFLLFCLACNARA) is a signal peptide. The segment at 26 to 208 (LPPLSSKPEQ…EAGDEKLRLA (183 aa)) is disordered. Over residues 44–74 (GDDKPVVIDTERIRGHHEYESGTRSESELRS) the composition is skewed to basic and acidic residues. A compositionally biased stretch (polar residues) spans 154–164 (RTQSAPRTLSA). Basic and acidic residues predominate over residues 181–208 (DQDRPGFAEGERIGGHREEAGDEKLRLA).

It belongs to the LptD family. Component of the lipopolysaccharide transport and assembly complex. Interacts with LptE and LptA.

The protein resides in the cell outer membrane. Its function is as follows. Together with LptE, is involved in the assembly of lipopolysaccharide (LPS) at the surface of the outer membrane. The chain is LPS-assembly protein LptD from Nitrosospira multiformis (strain ATCC 25196 / NCIMB 11849 / C 71).